We begin with the raw amino-acid sequence, 1305 residues long: MMLGLESLPDPMETWEIIETIGKGTYGKVYKVANKRDGSLAAVKVLDPVSDMDEEIEAEYNILQFLPSHPNVVKFYGMFYKADRCVGGQLWLVLELCNGGSVTELVKGLLRCGKRLDEAVISYILYGALLGLQHLHCHRIIHRDVKGNNILLTTEGGVKLVDFGVSAQLTSTRLRRNTSVGTPFWMAPEVIACEQQYDSSYDARCDVWSLGITAIELGDGDPPLFEMHPVKMLFKIPRNPPPTLLHPDSWCEEFNHFISQCLIKDFEKRPSVTHLLDHPFIKGTQGKVLCLQKQLAKVLQDQKHRNPVAKTRHERMHTGRPHRVEDAGKCCLEDDLVNLEVLDEDTIIYWLQKRYADALIYTYVGDILIALNPFQNLSIYSPQFSRLYHGVKRSSNPPHIFASADNAYQCLVTFSKDQCIVISGESGSGKTESAHLIVQHLTFLGKADNQTLRQKILQVNSLVEAFGNARTAINDNSSRFGKYLEMMFTPTGAVMGARISEYLLEKSRVIQQAAGEKNFHIFYYIYAGLYHQKKLAEFRLPEEKPPRYIAGETERVMQDITSKESYRTQFEAIQHCFKIIGFADKEVHSVYRILAGILNIGSIEFAAISSQHQTDKSEVPNPEALENAACVLCISSEELQEALTSHCVVTRGETIVRANTVDRAEDVRDAMSKALYGRLFSWIVNRINTLLQPDKNICSAEDRMNVGILDIFGFEDFQRNSFEQLCINIANEQIQYYFNQHVFALEQMEYKNEGVDAVLVQYEDNRPLLDMFLQKPLGLLALLDEESRFPQGTDQTLVDKFEDNLRCKFFWRPKGVELCFGIQHYAGPVLYDASGVLEKNRDTLPADVVVVLRTSENKLLQQLFSIPLTKTGNLAQTRAKITASSRSLPPHFSAGRAKVDTLEVIRHPEETTNMKRQTMASYFRYSLMDLLSKMVVGQPHFIRCIKPNDDRKALQFSQDRVLAQLRSTGILETVSIRRQGYSHRIFFEEFVKRYYYLAFRAHQTPPANKESCVAILEKSRLDHWVLGKTKVFLKYYHVEQLNLLLREVMGRVVMLQAYTKGWLGARRYKRAKEKREKGAITIQSAWRGYDARRKLKQRSRRRSESEAHIHTVLQTTPDQKYCPDSGGESNRGHEETSRNCPAEADTDGHPQAQSPPTGCDVTSGHADTAAGYTVAELSVAGTDVSPSLVYHTASAHQRLSPCEDSLKPGSEEGLSQKQRAPRRRCQQPKMLSSPEDTMYYNQLNGTLEYQGSQRKPRKLGQIKVLDGEDQYYKCLSPGACAPEETHSVHPFFFSSSPREDPFAQH.

Residues 15 to 281 form the Protein kinase domain; it reads WEIIETIGKG…VTHLLDHPFI (267 aa). ATP-binding positions include 21-29 and Lys44; that span reads IGKGTYGKV. The active-site Proton acceptor is the Asp144. Residues 331-1046 form the Myosin motor domain; the sequence is CLEDDLVNLE…HVEQLNLLLR (716 aa). The interval 927 to 949 is actin-binding; that stretch reads LMDLLSKMVVGQPHFIRCIKPND. IQ domains lie at 1048-1077 and 1075-1104; these read VMGR…KREK and REKG…RRSE. Disordered regions lie at residues 1093 to 1164 and 1200 to 1233; these read RKLK…VTSG and SPCE…MLSS.

The protein in the C-terminal section; belongs to the TRAFAC class myosin-kinesin ATPase superfamily. Myosin family. This sequence in the N-terminal section; belongs to the protein kinase superfamily. STE Ser/Thr protein kinase family. In terms of assembly, interacts (via C-terminus) with ESPN. Interacts (via C-terminus) with ESPNL. In terms of tissue distribution, expressed in the cochlear hair cells (at protein level). Expressed in utricle hair bundles (at protein level).

The protein resides in the cytoplasm. It localises to the cytoskeleton. The protein localises to the cell projection. Its subcellular location is the stereocilium. It catalyses the reaction L-seryl-[protein] + ATP = O-phospho-L-seryl-[protein] + ADP + H(+). The catalysed reaction is L-threonyl-[protein] + ATP = O-phospho-L-threonyl-[protein] + ADP + H(+). Probable actin-based motor with a protein kinase activity. Required for normal cochlear hair bundle development and hearing. Plays an important role in the early steps of cochlear hair bundle morphogenesis. Influences the number and lengths of stereocilia to be produced and limits the growth of microvilli within the forming auditory hair bundles thereby contributing to the architecture of the hair bundle, including its staircase pattern. Involved in the elongation of actin in stereocilia tips by transporting the actin regulatory factor ESPN to the plus ends of actin filaments. In Mus musculus (Mouse), this protein is Myosin-IIIb (Myo3b).